Consider the following 860-residue polypeptide: Leucine--tRNA ligase (860 aa).

The short motif at 42–52 (PYPSGRLHMGH) is the 'HIGH' region element. A 'KMSKS' region motif is present at residues 619 to 623 (KMSKS). Residue Lys622 participates in ATP binding.

This sequence belongs to the class-I aminoacyl-tRNA synthetase family.

The protein resides in the cytoplasm. The catalysed reaction is tRNA(Leu) + L-leucine + ATP = L-leucyl-tRNA(Leu) + AMP + diphosphate. The sequence is that of Leucine--tRNA ligase from Mannheimia succiniciproducens (strain KCTC 0769BP / MBEL55E).